Reading from the N-terminus, the 638-residue chain is Threonine--tRNA ligase (638 aa).

In terms of domain architecture, TGS spans 1–61; that stretch reads MVAITLPDGK…DRDVNLSIIT (61 aa). Residues 244-536 form a catalytic region; the sequence is DHRRLGREME…LIENFAGRFP (293 aa). Positions 336, 387, and 513 each coordinate Zn(2+).

Belongs to the class-II aminoacyl-tRNA synthetase family. As to quaternary structure, homodimer. The cofactor is Zn(2+).

Its subcellular location is the cytoplasm. The catalysed reaction is tRNA(Thr) + L-threonine + ATP = L-threonyl-tRNA(Thr) + AMP + diphosphate + H(+). Functionally, catalyzes the attachment of threonine to tRNA(Thr) in a two-step reaction: L-threonine is first activated by ATP to form Thr-AMP and then transferred to the acceptor end of tRNA(Thr). Also edits incorrectly charged L-seryl-tRNA(Thr). In Paramagnetospirillum magneticum (strain ATCC 700264 / AMB-1) (Magnetospirillum magneticum), this protein is Threonine--tRNA ligase.